The primary structure comprises 441 residues: Cytochrome P450 monooxygenase cpsC (441 aa).

Residues 175-195 form a disordered region; it reads STTSQARKDETTATQQAGMEQ. Over residues 186–195 the composition is skewed to polar residues; it reads TATQQAGMEQ. A heme-binding site is contributed by C377.

The protein belongs to the cytochrome P450 family. Requires heme as cofactor.

The catalysed reaction is campesine D + reduced [NADPH--hemoprotein reductase] + O2 = campesine G + oxidized [NADPH--hemoprotein reductase] + 2 H2O + H(+). It participates in alkaloid biosynthesis. In terms of biological role, cytochrome P450 monooxygenase; part of the gene cluster that mediates the biosynthesis of campesine G, a dimeric indole piperazine alkaloid that shows good insecticidal activity Galleria mellonella. Within the pathway, cpsC catalyzes regioselective dehydrogenation reaction towards C2-N1 of the (2H)-indole ring of campesine D to yield the final product, campesine G. The non-canonical non-ribosomal peptide synthetase cpsA catalyzes the first steps of the pathway by producing L-tryptophanal and L-valinal from their respective amino-acids. These products condensate spontaneously to form trypyl-valyl pyrazine also known as didehydrocampesine A. The NmrA-like family domain-containing oxidoreductase cpsB is the next enzyme in cps pathway and reduces the unstable didehydrocampesine A to campesine A. The methyltransferase cpsF and the acetyltransferase cpsE both recognize N13 of piperazine ring to carry out methylation and acetylation of campesine A to produce campesine C and B, respectively. The cytochrome P450 monooxygenase cpsD then acts as a dimerase that catalyzes oxidative heterocoupling between campesine B and C to produce heterodimers with unexpected 6/5/6/6/6/6/5/6 eight-ring scaffold called campesine D. Finally,the cytochrome P450 monooxygenase cpsC is a regioselective dehydrogenase that catalyzes dehydrogenation reaction towards C2-N1 to produce campesine G. The protein is Cytochrome P450 monooxygenase cpsC of Aspergillus campestris (strain IBT 28561).